Reading from the N-terminus, the 391-residue chain is Ammonium transporter Amt1 (391 aa).

The Extracellular portion of the chain corresponds to Met1–Ala7. A helical transmembrane segment spans residues Trp8–Tyr27. Residues Ala28–Asn38 are Cytoplasmic-facing. The chain crosses the membrane as a helical span at residues Met39 to Tyr57. The Extracellular segment spans residues Gly58–Phe89. Residues Met90–Ser106 traverse the membrane as a helical segment. The Cytoplasmic portion of the chain corresponds to Ala107–Lys113. A helical membrane pass occupies residues Val114–Trp137. At Gly138 to Gly152 the chain is on the extracellular side. Residues Gly153–Thr170 form a helical membrane-spanning segment. Residues Ile171–Pro188 are Cytoplasmic-facing. A helical transmembrane segment spans residues Leu189–Ser208. The Extracellular segment spans residues Ala209–Ile217. A helical transmembrane segment spans residues Asn218 to Ile237. Over Gly238–Gly245 the chain is Cytoplasmic. A helical transmembrane segment spans residues Ser246 to Ala263. Topologically, residues Ala264 to Asp268 are extracellular. A helical transmembrane segment spans residues Val269 to Met287. Over Asp288–Asp300 the chain is Cytoplasmic. Residues Ala301–Leu319 traverse the membrane as a helical segment. At Ala320–Leu337 the chain is on the extracellular side. The helical transmembrane segment at Leu338–Val363 threads the bilayer. Residues Asp364–Thr391 are Cytoplasmic-facing.

It belongs to the ammonia transporter channel (TC 1.A.11.2) family. As to quaternary structure, homotrimer.

It is found in the cell membrane. Involved in the uptake of ammonium/ammonia (NH(4)(+)/NH(3)). Transport is electrogenic. Transport the ammonium and methylammonium cation with high specificity. The protein is Ammonium transporter Amt1 of Archaeoglobus fulgidus (strain ATCC 49558 / DSM 4304 / JCM 9628 / NBRC 100126 / VC-16).